A 437-amino-acid chain; its full sequence is Glycogen synthase (437 aa).

Position 15 (Lys-15) interacts with ADP-alpha-D-glucose.

Belongs to the glycosyltransferase 1 family. Bacterial/plant glycogen synthase subfamily.

The catalysed reaction is [(1-&gt;4)-alpha-D-glucosyl](n) + ADP-alpha-D-glucose = [(1-&gt;4)-alpha-D-glucosyl](n+1) + ADP + H(+). It functions in the pathway glycan biosynthesis; glycogen biosynthesis. Functionally, synthesizes alpha-1,4-glucan chains using ADP-glucose. The sequence is that of Glycogen synthase from Thermus thermophilus (strain ATCC BAA-163 / DSM 7039 / HB27).